The following is a 119-amino-acid chain: Large ribosomal subunit protein uL14m (119 aa).

Belongs to the universal ribosomal protein uL14 family.

The protein resides in the mitochondrion. The polypeptide is Large ribosomal subunit protein uL14m (Tetrahymena pyriformis).